We begin with the raw amino-acid sequence, 238 residues long: Zinc import ATP-binding protein ZnuC (238 aa).

The 216-residue stretch at 5 to 220 (VKLKNVCVNL…LEFISIFGLK (216 aa)) folds into the ABC transporter domain. Residue 37–44 (GPNGAGKS) participates in ATP binding.

The protein belongs to the ABC transporter superfamily. Zinc importer (TC 3.A.1.15.5) family. The complex is composed of two ATP-binding proteins (ZnuC), two transmembrane proteins (ZnuB) and a solute-binding protein (ZnuA).

It localises to the cell inner membrane. It carries out the reaction Zn(2+)(out) + ATP(in) + H2O(in) = Zn(2+)(in) + ADP(in) + phosphate(in) + H(+)(in). In terms of biological role, part of the ABC transporter complex ZnuABC involved in zinc import. Responsible for energy coupling to the transport system. The chain is Zinc import ATP-binding protein ZnuC from Buchnera aphidicola subsp. Acyrthosiphon pisum (strain APS) (Acyrthosiphon pisum symbiotic bacterium).